The primary structure comprises 254 residues: Lipid uptake coordinator A (254 aa).

4 helical membrane-spanning segments follow: residues 5–25 (VAVL…FYFV), 44–64 (LRIA…FTLL), 85–105 (IMAH…EVWL), and 114–134 (LFGI…GFYL). Residues 143–254 (PPPKPLKPKK…SGVQVAKVDE (112 aa)) are disordered. The span at 148-163 (LKPKKPKQRRLRRKKT) shows a compositional bias: basic residues. The segment covering 169 to 191 (AEPEAAEEAENTELAAQEDEEAV) has biased composition (acidic residues). Residues 192–220 (EAPPESIESPGGEPESATREAPAAETATA) show a composition bias toward low complexity. The segment covering 227–244 (LRNRRPTGKTSHRRRRTR) has biased composition (basic residues).

Interacts with the Mce1 and Mce4 accessory subunits Rv0199/OmamA, Rv0177/Mam1C and Rv3492c/Mam4B.

It localises to the cell membrane. Its function is as follows. Required for the import of both fatty acids and cholesterol during growth in macrophages and in axenic culture. Facilitates the uptake of these lipids by stabilizing protein subunits of the Mce1 and Mce4 multi-subunit transporters, which transport fatty acids and cholesterol, respectively. Required for full virulence in vivo. The sequence is that of Lipid uptake coordinator A from Mycobacterium tuberculosis (strain ATCC 25618 / H37Rv).